The primary structure comprises 96 residues: Muconolactone Delta-isomerase (96 aa).

The protein belongs to the muconolactone Delta-isomerase family. As to quaternary structure, homodecamer.

It catalyses the reaction (S)-muconolactone = (4,5-dihydro-5-oxofuran-2-yl)-acetate. It functions in the pathway aromatic compound metabolism; beta-ketoadipate pathway; 5-oxo-4,5-dihydro-2-furylacetate from catechol: step 3/3. In Pseudomonas aeruginosa (strain ATCC 15692 / DSM 22644 / CIP 104116 / JCM 14847 / LMG 12228 / 1C / PRS 101 / PAO1), this protein is Muconolactone Delta-isomerase (catC).